We begin with the raw amino-acid sequence, 967 residues long: Isoleucine--tRNA ligase 2 (967 aa).

The short motif at 58–68 (PYANGDIHIGH) is the 'HIGH' region element. A disordered region spans residues 430–463 (EADPGRADVTEEAGATGEARKVGKAEEAEEAGPV). Glutamate 598 provides a ligand contact to L-isoleucyl-5'-AMP. A 'KMSKS' region motif is present at residues 639 to 643 (KMSKS). Residue lysine 642 coordinates ATP. Cysteine 922, cysteine 925, cysteine 942, and cysteine 945 together coordinate Zn(2+).

It belongs to the class-I aminoacyl-tRNA synthetase family. IleS type 1 subfamily. In terms of assembly, monomer. The cofactor is Zn(2+).

It is found in the cytoplasm. It catalyses the reaction tRNA(Ile) + L-isoleucine + ATP = L-isoleucyl-tRNA(Ile) + AMP + diphosphate. Functionally, catalyzes the attachment of isoleucine to tRNA(Ile). As IleRS can inadvertently accommodate and process structurally similar amino acids such as valine, to avoid such errors it has two additional distinct tRNA(Ile)-dependent editing activities. One activity is designated as 'pretransfer' editing and involves the hydrolysis of activated Val-AMP. The other activity is designated 'posttransfer' editing and involves deacylation of mischarged Val-tRNA(Ile). The polypeptide is Isoleucine--tRNA ligase 2 (Burkholderia pseudomallei (strain K96243)).